A 443-amino-acid chain; its full sequence is Xaa-Pro dipeptidase (443 aa).

Residues Asp246, Asp257, His339, Glu384, and Glu423 each coordinate Mn(2+).

It belongs to the peptidase M24B family. Bacterial-type prolidase subfamily. The cofactor is Mn(2+).

It carries out the reaction Xaa-L-Pro dipeptide + H2O = an L-alpha-amino acid + L-proline. Splits dipeptides with a prolyl residue in the C-terminal position. The protein is Xaa-Pro dipeptidase of Edwardsiella ictaluri (strain 93-146).